The chain runs to 155 residues: Xanthine-guanine phosphoribosyltransferase 2 (155 aa).

Residues 37–38 (RG) and 91–99 (DDLVDTGNT) contribute to the 5-phospho-alpha-D-ribose 1-diphosphate site. Position 92 (D92) interacts with Mg(2+). Guanine contacts are provided by D95 and I138. 2 residues coordinate xanthine: D95 and I138. Residues 95–99 (DTGNT) and 137–138 (WI) contribute to the GMP site.

The protein belongs to the purine/pyrimidine phosphoribosyltransferase family. XGPT subfamily. In terms of assembly, homotetramer. It depends on Mg(2+) as a cofactor.

The protein localises to the cell inner membrane. It carries out the reaction GMP + diphosphate = guanine + 5-phospho-alpha-D-ribose 1-diphosphate. The catalysed reaction is XMP + diphosphate = xanthine + 5-phospho-alpha-D-ribose 1-diphosphate. It catalyses the reaction IMP + diphosphate = hypoxanthine + 5-phospho-alpha-D-ribose 1-diphosphate. It functions in the pathway purine metabolism; GMP biosynthesis via salvage pathway; GMP from guanine: step 1/1. Its pathway is purine metabolism; XMP biosynthesis via salvage pathway; XMP from xanthine: step 1/1. Its function is as follows. Purine salvage pathway enzyme that catalyzes the transfer of the ribosyl-5-phosphate group from 5-phospho-alpha-D-ribose 1-diphosphate (PRPP) to the N9 position of the 6-oxopurines guanine and xanthine to form the corresponding ribonucleotides GMP (guanosine 5'-monophosphate) and XMP (xanthosine 5'-monophosphate), with the release of PPi. To a lesser extent, also acts on hypoxanthine. This is Xanthine-guanine phosphoribosyltransferase 2 from Haemophilus influenzae (strain 86-028NP).